A 422-amino-acid polypeptide reads, in one-letter code: Keratin, type II cytoskeletal 80 (422 aa).

The interval 1-82 (MACRSCVVGF…DPAIQQQKNN (82 aa)) is head. S45 is subject to Phosphoserine. Positions 83–118 (EKEEMKVLNDKFASLIGKVQALEQRNQLLETRWHFL) are coil 1A. One can recognise an IF rod domain in the interval 83 to 394 (EKEEMKVLND…KLMEGEESRM (312 aa)). Residues 119–135 (QSQDSATFDLGHLYEEY) form a linker 1 region. The segment at 136–227 (QGRLQEELRK…SIYEQELKDL (92 aa)) is coil 1B. Residues 228-251 (AAQLKDVSVTVGMDSRCHIDLSGI) form a linker 12 region. Residues 252–390 (VEEVKAQYDA…ATYRKLMEGE (139 aa)) are coil 2. The tract at residues 391–422 (ESRMDMPSATVVSAVQARCRTAPTLPHPLCSL) is tail.

This sequence belongs to the intermediate filament family. As to quaternary structure, heterotetramer of two type I and two type II keratins.

In Bos taurus (Bovine), this protein is Keratin, type II cytoskeletal 80 (KRT80).